A 497-amino-acid polypeptide reads, in one-letter code: Serine/threonine protein phosphatase 2A 57 kDa regulatory subunit B' epsilon isoform (497 aa).

Residues 12 to 71 (KFNKSDQHHQDNNNNNNNTSTNTVVRGSRTTTPAPSSVSNGESQTTAQSPSQTPNHPMFT) form a disordered region. The span at 23-34 (NNNNNNNTSTNT) shows a compositional bias: low complexity. Residues 35–71 (VVRGSRTTTPAPSSVSNGESQTTAQSPSQTPNHPMFT) are compositionally biased toward polar residues.

This sequence belongs to the phosphatase 2A regulatory subunit B56 family. PP2A consists of a common heteromeric enzyme, composed of a catalytic subunit (subunits C), a constant regulatory subunit (subunit A), and a variety of regulatory subunits such as subunits B (the R2/B/PR55/B55, R3/B''/PR72/PR130/PR59 and R5/B'/B56 families). Expressed ubiquitously.

The protein localises to the cytoplasm. The B regulatory subunit may modulate substrate selectivity and catalytic activity, and may also direct the localization of the catalytic enzyme to a particular subcellular compartment. In Arabidopsis thaliana (Mouse-ear cress), this protein is Serine/threonine protein phosphatase 2A 57 kDa regulatory subunit B' epsilon isoform (B'EPSILON).